A 252-amino-acid chain; its full sequence is Phosphate import ATP-binding protein PstB 1 (252 aa).

The 242-residue stretch at 6-247 folds into the ABC transporter domain; sequence LQIRDLSVYY…PKRKETEDYI (242 aa). Position 38-45 (38-45) interacts with ATP; that stretch reads GPSGSGKS.

The protein belongs to the ABC transporter superfamily. Phosphate importer (TC 3.A.1.7) family. As to quaternary structure, the complex is composed of two ATP-binding proteins (PstB), two transmembrane proteins (PstC and PstA) and a solute-binding protein (PstS).

It is found in the cell membrane. The catalysed reaction is phosphate(out) + ATP + H2O = ADP + 2 phosphate(in) + H(+). Its function is as follows. Part of the ABC transporter complex PstSACB involved in phosphate import. Responsible for energy coupling to the transport system. The polypeptide is Phosphate import ATP-binding protein PstB 1 (Streptococcus pyogenes serotype M1).